Consider the following 210-residue polypeptide: Glutathione S-transferase P 1 (210 aa).

Residues proline 2 to glycine 81 enclose the GST N-terminal domain. At tyrosine 4 the chain carries Phosphotyrosine; by EGFR. Residues tyrosine 8, arginine 14, tryptophan 39, lysine 45, and glutamine 52–leucine 53 contribute to the glutathione site. Threonine 62 carries the phosphothreonine modification. Glutathione is bound at residue glutamine 65 to serine 66. The GST C-terminal domain maps to asparagine 83–isoleucine 204. N6-succinyllysine occurs at positions 103 and 116. Lysine 128 carries the N6-acetyllysine modification.

Homodimer. Interacts with CDK5. Ubiquitously expressed.

It localises to the cytoplasm. The protein localises to the mitochondrion. The protein resides in the nucleus. It carries out the reaction RX + glutathione = an S-substituted glutathione + a halide anion + H(+). It catalyses the reaction prostaglandin J2 + glutathione = prostaglandin J2-S-(R)-glutathione. The enzyme catalyses prostaglandin J2 + glutathione = prostaglandin J2-S-(S)-glutathione. The catalysed reaction is prostaglandin A2 + glutathione = prostaglandin A2-S-(S)-glutathione. It carries out the reaction 11(S)-hydroxy-14(S),15(S)-epoxy-(5Z,8Z,12E)-eicosatrienoate + glutathione = (11S,15S)-dihydroxy-14(R)-S-glutathionyl-(5Z,8Z,12E)-eicosatrienoate. Conjugation of reduced glutathione to a wide number of exogenous and endogenous hydrophobic electrophiles. Involved in the formation of glutathione conjugates of both prostaglandin A2 (PGA2) and prostaglandin J2 (PGJ2). Participates in the formation of novel hepoxilin regioisomers. Negatively regulates CDK5 activity via p25/p35 translocation to prevent neurodegeneration. The sequence is that of Glutathione S-transferase P 1 from Mus musculus (Mouse).